Consider the following 466-residue polypeptide: Phosphoenolpyruvate carboxykinase (ATP) (466 aa).

Substrate is bound by residues Arg61, Tyr196, and Lys202. ATP contacts are provided by residues Lys202, His221, and 237–245 (GLSGTGKTT). Mn(2+)-binding residues include Lys202 and His221. Residue Asp258 participates in Mn(2+) binding. ATP contacts are provided by Glu286, Arg323, and Thr448. Arg323 provides a ligand contact to substrate.

It belongs to the phosphoenolpyruvate carboxykinase (ATP) family. Mn(2+) serves as cofactor.

The protein resides in the cytoplasm. The enzyme catalyses oxaloacetate + ATP = phosphoenolpyruvate + ADP + CO2. Its pathway is carbohydrate biosynthesis; gluconeogenesis. In terms of biological role, involved in the gluconeogenesis. Catalyzes the conversion of oxaloacetate (OAA) to phosphoenolpyruvate (PEP) through direct phosphoryl transfer between the nucleoside triphosphate and OAA. This Deinococcus radiodurans (strain ATCC 13939 / DSM 20539 / JCM 16871 / CCUG 27074 / LMG 4051 / NBRC 15346 / NCIMB 9279 / VKM B-1422 / R1) protein is Phosphoenolpyruvate carboxykinase (ATP).